The sequence spans 202 residues: Na(+)-translocating NADH-quinone reductase subunit E (202 aa).

A run of 6 helical transmembrane segments spans residues 11 to 31 (AVFV…FIAI), 35 to 55 (VETA…TVPA), 81 to 101 (FLGL…LEML), 114 to 134 (GVFL…LFMV), 144 to 164 (TVYG…LAGI), and 180 to 200 (LGIT…FSGV).

Belongs to the NqrDE/RnfAE family. Composed of six subunits; NqrA, NqrB, NqrC, NqrD, NqrE and NqrF.

It localises to the cell inner membrane. The catalysed reaction is a ubiquinone + n Na(+)(in) + NADH + H(+) = a ubiquinol + n Na(+)(out) + NAD(+). In terms of biological role, NQR complex catalyzes the reduction of ubiquinone-1 to ubiquinol by two successive reactions, coupled with the transport of Na(+) ions from the cytoplasm to the periplasm. NqrA to NqrE are probably involved in the second step, the conversion of ubisemiquinone to ubiquinol. The sequence is that of Na(+)-translocating NADH-quinone reductase subunit E from Pseudomonas aeruginosa (strain LESB58).